The primary structure comprises 383 residues: Proton extrusion protein PxcA (383 aa).

4 consecutive transmembrane segments (helical) span residues Ile163–Ile183, Ala258–Ala278, Ile306–Leu326, and Phe341–Ile361.

Belongs to the CemA family.

The protein resides in the cell inner membrane. Functionally, required for H(+) efflux immediately after light irradiation to form a rapid H(+) concentration gradient across the thylakoid membranes. Together with PxcL, contributes to transient H(+) uptake following dark to light transition. This is Proton extrusion protein PxcA from Synechococcus sp. (strain CC9902).